We begin with the raw amino-acid sequence, 333 residues long: Dioxygenase cnsJ (333 aa).

Fe cation is bound by residues histidine 153, aspartate 155, and histidine 235. A disordered region spans residues 309–333; it reads NAQPEGEDDGGMKPNEGEHVVEAQI. Residues 323 to 333 show a composition bias toward basic and acidic residues; the sequence is NEGEHVVEAQI.

The protein belongs to the PhyH family. In terms of assembly, homodimer. Fe cation serves as cofactor.

It functions in the pathway alkaloid biosynthesis. Dioxygenase; part of the gene cluster that mediates the biosynthesis of communesins, a prominent class of indole alkaloids with great potential as pharmaceuticals. Communesins are biosynthesized by the coupling of tryptamine and aurantioclavine, two building blocks derived from L-tryptophan. The L-tryptophan decarboxylase cnsB converts L-tryptophan to tryptamine, whereas the tryptophan dimethylallyltransferase cnsF converts L-tryptophan to 4-dimethylallyl tryptophan which is further transformed to aurantioclavine by the aurantioclavine synthase cnsA, probably aided by the catalase cnsD. The cytochrome P450 monooxygenase cnsC catalyzes the heterodimeric coupling between the two different indole moieties, tryptamine and aurantioclavine, to construct vicinal quaternary stereocenters and yield the heptacyclic communesin scaffold. The O-methyltransferase cnsE then methylates the communesin scaffold to produce communesin K, the simplest characterized communesin that contains the heptacyclic core. The dioxygenase cnsJ converts communesin K into communesin I. Acylation to introduce the hexadienyl group at position N16 of communesin I by the acyltransferase cnsK leads to the production of communesin B. The hexadienyl group is produced by the highly reducing polyketide synthase cnsI, before being hydrolytically removed from cnsI by the serine hydrolase cnsH, converted into hexadienyl-CoA by the CoA ligase cnsG, and then transferred to communesin I by cnsK. Surprisingly, cnsK may also be a promiscuous acyltransferase that can tolerate a range of acyl groups, including acetyl-, propionyl-, and butyryl-CoA, which lead to communesins A, G and H respectively. The roles of the alpha-ketoglutarate-dependent dioxygenases cnsM and cnsP have still to be determined. This Penicillium expansum (Blue mold rot fungus) protein is Dioxygenase cnsJ.